The sequence spans 749 residues: Protein kinase domain-containing protein ppk32 (749 aa).

One can recognise a Protein kinase domain in the interval 21-317; the sequence is IQKENSVQVG…MFELERSPYF (297 aa). 2 disordered regions span residues 598–677 and 706–749; these read KKLQ…VTAK and PLIP…KSLL. The segment covering 602 to 651 has biased composition (polar residues); the sequence is SKPSSVVPNRITTDPFSSQTKEATSKPSSISPNKATTNIFTSQASLSSQG. Residue serine 632 is modified to Phosphoserine. Composition is skewed to low complexity over residues 657–670 and 721–735; these read SSAS…QRAS and NRRV…NTVT.

It localises to the cytoplasm. This Schizosaccharomyces pombe (strain 972 / ATCC 24843) (Fission yeast) protein is Protein kinase domain-containing protein ppk32 (ppk32).